A 131-amino-acid chain; its full sequence is ATP synthase epsilon chain (131 aa).

The protein belongs to the ATPase epsilon chain family. F-type ATPases have 2 components, CF(1) - the catalytic core - and CF(0) - the membrane proton channel. CF(1) has five subunits: alpha(3), beta(3), gamma(1), delta(1), epsilon(1). CF(0) has three main subunits: a, b and c.

The protein resides in the cell inner membrane. In terms of biological role, produces ATP from ADP in the presence of a proton gradient across the membrane. The protein is ATP synthase epsilon chain of Helicobacter hepaticus (strain ATCC 51449 / 3B1).